Reading from the N-terminus, the 408-residue chain is Arginine biosynthesis bifunctional protein ArgJ (408 aa).

Residues threonine 156, lysine 182, threonine 193, glutamate 279, asparagine 403, and threonine 408 each coordinate substrate. The Nucleophile role is filled by threonine 193.

It belongs to the ArgJ family. Heterotetramer of two alpha and two beta chains.

It is found in the cytoplasm. The catalysed reaction is N(2)-acetyl-L-ornithine + L-glutamate = N-acetyl-L-glutamate + L-ornithine. It carries out the reaction L-glutamate + acetyl-CoA = N-acetyl-L-glutamate + CoA + H(+). It functions in the pathway amino-acid biosynthesis; L-arginine biosynthesis; L-ornithine and N-acetyl-L-glutamate from L-glutamate and N(2)-acetyl-L-ornithine (cyclic): step 1/1. Its pathway is amino-acid biosynthesis; L-arginine biosynthesis; N(2)-acetyl-L-ornithine from L-glutamate: step 1/4. Functionally, catalyzes two activities which are involved in the cyclic version of arginine biosynthesis: the synthesis of N-acetylglutamate from glutamate and acetyl-CoA as the acetyl donor, and of ornithine by transacetylation between N(2)-acetylornithine and glutamate. The polypeptide is Arginine biosynthesis bifunctional protein ArgJ (Methylococcus capsulatus (strain ATCC 33009 / NCIMB 11132 / Bath)).